The primary structure comprises 204 residues: Imidazole glycerol phosphate synthase subunit HisH 1 (204 aa).

Positions 5–204 (KVVIIDTGCA…AKLIQNFLEL (200 aa)) constitute a Glutamine amidotransferase type-1 domain. C80 functions as the Nucleophile in the catalytic mechanism. Residues H186 and E188 contribute to the active site.

In terms of assembly, heterodimer of HisH and HisF.

The protein resides in the cytoplasm. The catalysed reaction is 5-[(5-phospho-1-deoxy-D-ribulos-1-ylimino)methylamino]-1-(5-phospho-beta-D-ribosyl)imidazole-4-carboxamide + L-glutamine = D-erythro-1-(imidazol-4-yl)glycerol 3-phosphate + 5-amino-1-(5-phospho-beta-D-ribosyl)imidazole-4-carboxamide + L-glutamate + H(+). The enzyme catalyses L-glutamine + H2O = L-glutamate + NH4(+). The protein operates within amino-acid biosynthesis; L-histidine biosynthesis; L-histidine from 5-phospho-alpha-D-ribose 1-diphosphate: step 5/9. In terms of biological role, IGPS catalyzes the conversion of PRFAR and glutamine to IGP, AICAR and glutamate. The HisH subunit provides the glutamine amidotransferase activity that produces the ammonia necessary to HisF for the synthesis of IGP and AICAR. This is Imidazole glycerol phosphate synthase subunit HisH 1 (hisH1) from Vibrio vulnificus (strain YJ016).